We begin with the raw amino-acid sequence, 323 residues long: Mediator of RNA polymerase II transcription subunit 4 (323 aa).

Residues 1 to 36 are disordered; sequence MLPFKKADSPFKSNPVSRVGSSTRLNQLGNIKSNPT. Residues 11–36 show a composition bias toward polar residues; sequence FKSNPVSRVGSSTRLNQLGNIKSNPT. Positions 79–167 form a coiled coil; that stretch reads MVQKVNEYER…VSYRNELKKL (89 aa). 2 stretches are compositionally biased toward basic and acidic residues: residues 241–262 and 282–303; these read HELG…KVDH and DEQR…KEEQ. Residues 241 to 323 form a disordered region; that stretch reads HELGETDKEN…LFDPDDEYSD (83 aa).

It belongs to the Mediator complex subunit 4 family. In terms of assembly, component of the Mediator complex.

Its subcellular location is the nucleus. Component of the Mediator complex, a coactivator involved in the regulated transcription of nearly all RNA polymerase II-dependent genes. Mediator functions as a bridge to convey information from gene-specific regulatory proteins to the basal RNA polymerase II transcription machinery. Mediator is recruited to promoters by direct interactions with regulatory proteins and serves as a scaffold for the assembly of a functional preinitiation complex with RNA polymerase II and the general transcription factors. This chain is Mediator of RNA polymerase II transcription subunit 4 (MED4), found in Candida albicans (strain SC5314 / ATCC MYA-2876) (Yeast).